The sequence spans 183 residues: MDPQTAATLLPLLGWALHGSVLTRRLASARRDPLTGLHTRAGWTARAEHCIHRHPRAAVLLVDLDHFKTLNDTHGHAAGDAALIATAHRLSSWCGRHGTAGRLGGDEFVTAIRDLDAVDLDALTTALHQPTNYDGTALPLAASVGVCRVAELPVPALTDALAAADAAMYAAKGRSRRGSRPAR.

In terms of domain architecture, GGDEF spans 55–183; the sequence is PRAAVLLVDL…RSRRGSRPAR (129 aa).

In terms of biological role, might be involved in pSAM2 replication control. This is an uncharacterized protein from Streptomyces ambofaciens.